Here is a 202-residue protein sequence, read N- to C-terminus: Large ribosomal subunit protein eL13 (202 aa).

Belongs to the eukaryotic ribosomal protein eL13 family.

This is Large ribosomal subunit protein eL13 (RPL13) from Nicotiana tabacum (Common tobacco).